A 365-amino-acid chain; its full sequence is Histidinol-phosphate aminotransferase (365 aa).

N6-(pyridoxal phosphate)lysine is present on Lys-221.

This sequence belongs to the class-II pyridoxal-phosphate-dependent aminotransferase family. Histidinol-phosphate aminotransferase subfamily. In terms of assembly, homodimer. Pyridoxal 5'-phosphate serves as cofactor.

The enzyme catalyses L-histidinol phosphate + 2-oxoglutarate = 3-(imidazol-4-yl)-2-oxopropyl phosphate + L-glutamate. It participates in amino-acid biosynthesis; L-histidine biosynthesis; L-histidine from 5-phospho-alpha-D-ribose 1-diphosphate: step 7/9. The chain is Histidinol-phosphate aminotransferase from Rhodopseudomonas palustris (strain HaA2).